Consider the following 676-residue polypeptide: MTQAHHDDAGARNALQGGLATDPKHKARIEELAERIEKYRASYYAGHPEISDAAFDALEDELRALDPAHPVLARVGSASLITEWEKARHEIPMGSLNKVVSEDELLGWVARCDEILVKDGHGDGGTGAAPPAPGSISSVAGDLFVAEKLDGISIEVIYKGGKLVDAITRGDGEWGERITANVARMKGIPSRIREKGRLSVRGEIILRLSDMKRHFPGVTSPRNMAAGAAKRFDGQGAEHCTVLFYDVADHLEIPTCRARFAWLRELGFATPQTAHGSVEDVVKLYRRYSSELRAGLDYEIDGLVVYVDSLHVQGLLGDVNRRPRGAVAFKFASPAKVTTVVAIQWDTGPSGRVTPVAIVEPVELAGANVRRASLHNSANVRSLGIGVGDEVLVSRRNDVIPYVEEVVEKRGPVAVPPSVCPVCSAPLVVEGEYLLCRNAACRALIEGRIHNWIDAIGALEWGDKLIEQVVAAGLVREPLDLYKLTVKSIADLDRRGEKSATKCLEQLKSRLPLALPVFLAALGIEGFAIQTARLLVSAGYTTIEKLLAAGEDELAGIPGLGAIKAASIVRGLRARSDEIGRLLAAGIVPVAPEAEGPLAGLTFCFTGAGARPRGELTHLVESSGGRVLNSVTKELNYLVIADVASTSSKAVKARKYGTKLITEDDLDKLIAERRGG.

Basic and acidic residues predominate over residues 1–10 (MTQAHHDDAG). The disordered stretch occupies residues 1–23 (MTQAHHDDAGARNALQGGLATDP). NAD(+) contacts are provided by residues 52 to 56 (DAAFD) and 95 to 96 (SL). K148 serves as the catalytic N6-AMP-lysine intermediate. NAD(+) contacts are provided by R169, E203, and K330. The Zn(2+) site is built by C420, C423, C436, and C441. The region spanning 593–676 (EAEGPLAGLT…DKLIAERRGG (84 aa)) is the BRCT domain.

It belongs to the NAD-dependent DNA ligase family. LigA subfamily. The cofactor is Mg(2+). Mn(2+) is required as a cofactor.

The enzyme catalyses NAD(+) + (deoxyribonucleotide)n-3'-hydroxyl + 5'-phospho-(deoxyribonucleotide)m = (deoxyribonucleotide)n+m + AMP + beta-nicotinamide D-nucleotide.. DNA ligase that catalyzes the formation of phosphodiester linkages between 5'-phosphoryl and 3'-hydroxyl groups in double-stranded DNA using NAD as a coenzyme and as the energy source for the reaction. It is essential for DNA replication and repair of damaged DNA. This Sorangium cellulosum (strain So ce56) (Polyangium cellulosum (strain So ce56)) protein is DNA ligase.